The sequence spans 138 residues: Acidic phospholipase A2 BITP01A (138 aa).

Residues 1 to 16 (MRTLWIMAVLLVGVEG) form the signal peptide. 7 disulfides stabilise this stretch: cysteine 42/cysteine 131, cysteine 44/cysteine 60, cysteine 59/cysteine 111, cysteine 65/cysteine 138, cysteine 66/cysteine 104, cysteine 73/cysteine 97, and cysteine 91/cysteine 102. Tyrosine 43, glycine 45, and glycine 47 together coordinate Ca(2+). Histidine 63 is a catalytic residue. Aspartate 64 contributes to the Ca(2+) binding site. Aspartate 105 is an active-site residue.

Requires Ca(2+) as cofactor. As to expression, expressed by the venom gland.

It is found in the secreted. It catalyses the reaction a 1,2-diacyl-sn-glycero-3-phosphocholine + H2O = a 1-acyl-sn-glycero-3-phosphocholine + a fatty acid + H(+). In terms of biological role, snake venom phospholipase A2 (PLA2) that induces edema in mice, produces neuromuscular blockade in chick biventer cervicis, increases CK release and produces myonecrosis. PLA2 catalyzes the calcium-dependent hydrolysis of the 2-acyl groups in 3-sn-phosphoglycerides. This chain is Acidic phospholipase A2 BITP01A, found in Bothrops insularis (Golden lancehead).